A 582-amino-acid polypeptide reads, in one-letter code: DNA mismatch repair protein MutL (582 aa).

The protein belongs to the DNA mismatch repair MutL/HexB family.

This protein is involved in the repair of mismatches in DNA. It is required for dam-dependent methyl-directed DNA mismatch repair. May act as a 'molecular matchmaker', a protein that promotes the formation of a stable complex between two or more DNA-binding proteins in an ATP-dependent manner without itself being part of a final effector complex. The polypeptide is DNA mismatch repair protein MutL (Acidiphilium cryptum (strain JF-5)).